The following is a 437-amino-acid chain: Aminopeptidase G (437 aa).

Active-site residues include Cys70, His361, and Asn382.

The protein belongs to the peptidase C1 family.

The protein resides in the cytoplasm. In Lactobacillus delbrueckii subsp. lactis, this protein is Aminopeptidase G (pepG).